The sequence spans 341 residues: MSGETFFLSNHSVAASQIAALAGLSFVTEDFAISAAGALATAGIGEICYMDDTKYIEELKVTRASACLISPRFKELVPGGTFSFVTPHPYAIYAQVLALLYPEATIPASNFGTNGISSKANIHASAIVGHGVTIDPGASVGPNARIGGFTCIGSNAVIGPSVRIGRNCYIGANVTVAYAVVGDRVIIHPGTSIGQDGFGFTFLGGKWVKVPQVGGVIIQDDVEVGANTTIDRGSMRATVIGEGTKLDNLVQVAHNVTIGAHCVIAAQVGIAGSTTIGDFVAIGGHAGIAPHLTIGEKAQIGGASGVMCDIPAGERWVGLPARPSRAFFRQFAALKRLAKKK.

The active-site Proton acceptor is His-254.

This sequence belongs to the transferase hexapeptide repeat family. LpxD subfamily. As to quaternary structure, homotrimer.

It carries out the reaction a UDP-3-O-[(3R)-3-hydroxyacyl]-alpha-D-glucosamine + a (3R)-hydroxyacyl-[ACP] = a UDP-2-N,3-O-bis[(3R)-3-hydroxyacyl]-alpha-D-glucosamine + holo-[ACP] + H(+). It functions in the pathway bacterial outer membrane biogenesis; LPS lipid A biosynthesis. In terms of biological role, catalyzes the N-acylation of UDP-3-O-acylglucosamine using 3-hydroxyacyl-ACP as the acyl donor. Is involved in the biosynthesis of lipid A, a phosphorylated glycolipid that anchors the lipopolysaccharide to the outer membrane of the cell. The sequence is that of UDP-3-O-acylglucosamine N-acyltransferase 2 from Nitrobacter winogradskyi (strain ATCC 25391 / DSM 10237 / CIP 104748 / NCIMB 11846 / Nb-255).